Reading from the N-terminus, the 450-residue chain is Tyrosine-protein kinase CSK (450 aa).

The residue at position 2 (serine 2) is an N-acetylserine. The region spanning 9-70 is the SH3 domain; the sequence is PSGTECIAKY…PANYVQKREG (62 aa). The segment at 9–70 is interaction with PTPN22; that stretch reads PSGTECIAKY…PANYVQKREG (62 aa). The SH2 domain occupies 82–171; it reads WFHGKITREQ…GLCTRLIKPK (90 aa). Tyrosine 184 bears the Phosphotyrosine mark. The Protein kinase domain occupies 195 to 449; it reads LKLLQTIGKG…LEHIKTHELH (255 aa). Residues 201–209 and lysine 222 each bind ATP; that span reads IGKGEFGDV. A Phosphotyrosine modification is found at tyrosine 304. Aspartate 314 (proton acceptor) is an active-site residue. Phosphoserine; by PKA is present on serine 364. Tyrosine 416 carries the phosphotyrosine; by autocatalysis modification.

The protein belongs to the protein kinase superfamily. Tyr protein kinase family. CSK subfamily. Homodimer (via SH3-domain). Interacts with PTPN22. Interacts with phosphorylated SIT1, PAG1, LIME1 and TGFB1I1; these interactions serve to recruit CSK to the membrane where it can phosphorylate and inhibit Src-family kinases. Interacts with SRCIN1. Interacts with RHOH. Interacts (via SH2 domain) with SCIMP; this interaction is dependent on phosphorylation of SCIMP 'Tyr-107'. Interacts (via SH2 domain) with PRAG1 (when phosphorylated at 'Tyr-391'); this interaction prevents translocation of CSK from the cytoplasm to the membrane leading to increased activity of CSK. Interacts with LRRK1. It depends on Mg(2+) as a cofactor. The cofactor is Mn(2+). Post-translationally, phosphorylated at Ser-364 by PKA, leading to increased activity. Autophosphorylated. As to expression, expressed in lung and macrophages.

The protein localises to the cytoplasm. The protein resides in the cell membrane. It catalyses the reaction L-tyrosyl-[protein] + ATP = O-phospho-L-tyrosyl-[protein] + ADP + H(+). In terms of biological role, non-receptor tyrosine-protein kinase that plays an important role in the regulation of cell growth, differentiation, migration and immune response. Phosphorylates tyrosine residues located in the C-terminal tails of Src-family kinases (SFKs) including LCK, SRC, HCK, FYN, LYN, CSK or YES1. Upon tail phosphorylation, Src-family members engage in intramolecular interactions between the phosphotyrosine tail and the SH2 domain that result in an inactive conformation. To inhibit SFKs, CSK is recruited to the plasma membrane via binding to transmembrane proteins or adapter proteins located near the plasma membrane. Suppresses signaling by various surface receptors, including T-cell receptor (TCR) and B-cell receptor (BCR) by phosphorylating and maintaining inactive several positive effectors such as FYN or LCK. In Homo sapiens (Human), this protein is Tyrosine-protein kinase CSK (CSK).